Here is a 256-residue protein sequence, read N- to C-terminus: Enoyl-[acyl-carrier-protein] reductase [NADPH] FabI (256 aa).

Residues Gly-13, 19-20 (SI), 40-44 (RKERS), 66-67 (DV), and Ile-94 each bind NADP(+). Ala-97 serves as a coordination point for substrate. Active-site proton acceptor residues include Tyr-147 and Tyr-157. Residues Lys-164 and 193 to 197 (IRTLS) contribute to the NADP(+) site.

Belongs to the short-chain dehydrogenases/reductases (SDR) family. FabI subfamily. Homotetramer.

It catalyses the reaction a 2,3-saturated acyl-[ACP] + NADP(+) = a (2E)-enoyl-[ACP] + NADPH + H(+). Its pathway is lipid metabolism; fatty acid biosynthesis. Its function is as follows. Catalyzes the reduction of a carbon-carbon double bond in an enoyl moiety that is covalently linked to an acyl carrier protein (ACP). Involved in the elongation cycle of fatty acid which are used in the lipid metabolism. The protein is Enoyl-[acyl-carrier-protein] reductase [NADPH] FabI (fabI) of Staphylococcus aureus (strain MRSA252).